The sequence spans 557 residues: 2-succinyl-5-enolpyruvyl-6-hydroxy-3-cyclohexene-1-carboxylate synthase (557 aa).

It belongs to the TPP enzyme family. MenD subfamily. Homodimer. Mg(2+) serves as cofactor. Requires Mn(2+) as cofactor. It depends on thiamine diphosphate as a cofactor.

The catalysed reaction is isochorismate + 2-oxoglutarate + H(+) = 5-enolpyruvoyl-6-hydroxy-2-succinyl-cyclohex-3-ene-1-carboxylate + CO2. It functions in the pathway quinol/quinone metabolism; 1,4-dihydroxy-2-naphthoate biosynthesis; 1,4-dihydroxy-2-naphthoate from chorismate: step 2/7. Its pathway is quinol/quinone metabolism; menaquinone biosynthesis. Catalyzes the thiamine diphosphate-dependent decarboxylation of 2-oxoglutarate and the subsequent addition of the resulting succinic semialdehyde-thiamine pyrophosphate anion to isochorismate to yield 2-succinyl-5-enolpyruvyl-6-hydroxy-3-cyclohexene-1-carboxylate (SEPHCHC). In Phocaeicola vulgatus (strain ATCC 8482 / DSM 1447 / JCM 5826 / CCUG 4940 / NBRC 14291 / NCTC 11154) (Bacteroides vulgatus), this protein is 2-succinyl-5-enolpyruvyl-6-hydroxy-3-cyclohexene-1-carboxylate synthase.